The chain runs to 300 residues: tRNA dimethylallyltransferase 1 (300 aa).

10–17 (GPTGVGKT) is an ATP binding site. Position 12–17 (12–17 (TGVGKT)) interacts with substrate. The interaction with substrate tRNA stretch occupies residues 35-38 (DSRQ).

The protein belongs to the IPP transferase family. In terms of assembly, monomer. Requires Mg(2+) as cofactor.

The catalysed reaction is adenosine(37) in tRNA + dimethylallyl diphosphate = N(6)-dimethylallyladenosine(37) in tRNA + diphosphate. Its function is as follows. Catalyzes the transfer of a dimethylallyl group onto the adenine at position 37 in tRNAs that read codons beginning with uridine, leading to the formation of N6-(dimethylallyl)adenosine (i(6)A). This Phocaeicola vulgatus (strain ATCC 8482 / DSM 1447 / JCM 5826 / CCUG 4940 / NBRC 14291 / NCTC 11154) (Bacteroides vulgatus) protein is tRNA dimethylallyltransferase 1.